A 474-amino-acid chain; its full sequence is Probable glycine dehydrogenase (decarboxylating) subunit 2 (474 aa).

Lys-262 is modified (N6-(pyridoxal phosphate)lysine).

This sequence belongs to the GcvP family. C-terminal subunit subfamily. In terms of assembly, the glycine cleavage system is composed of four proteins: P, T, L and H. In this organism, the P 'protein' is a heterodimer of two subunits. Pyridoxal 5'-phosphate serves as cofactor.

The enzyme catalyses N(6)-[(R)-lipoyl]-L-lysyl-[glycine-cleavage complex H protein] + glycine + H(+) = N(6)-[(R)-S(8)-aminomethyldihydrolipoyl]-L-lysyl-[glycine-cleavage complex H protein] + CO2. The glycine cleavage system catalyzes the degradation of glycine. The P protein binds the alpha-amino group of glycine through its pyridoxal phosphate cofactor; CO(2) is released and the remaining methylamine moiety is then transferred to the lipoamide cofactor of the H protein. The sequence is that of Probable glycine dehydrogenase (decarboxylating) subunit 2 from Thermotoga maritima (strain ATCC 43589 / DSM 3109 / JCM 10099 / NBRC 100826 / MSB8).